The sequence spans 140 residues: Large ribosomal subunit protein uL22 (140 aa).

Belongs to the universal ribosomal protein uL22 family. In terms of assembly, part of the 50S ribosomal subunit.

Functionally, this protein binds specifically to 23S rRNA; its binding is stimulated by other ribosomal proteins, e.g. L4, L17, and L20. It is important during the early stages of 50S assembly. It makes multiple contacts with different domains of the 23S rRNA in the assembled 50S subunit and ribosome. The globular domain of the protein is located near the polypeptide exit tunnel on the outside of the subunit, while an extended beta-hairpin is found that lines the wall of the exit tunnel in the center of the 70S ribosome. The sequence is that of Large ribosomal subunit protein uL22 from Parafrankia sp. (strain EAN1pec).